A 513-amino-acid chain; its full sequence is MGLLDSKLCMMILAVSVLIIDINFEARIGTFFDLRLRTSYFKKSSSPLLSHTDSEEDLNYLSKHEDKRPVAIVTGSYESAHTGHMMHIREMFEHTGYKIVTKNELSLDTKWDVMWHHEYSFTQEPFKTLIKNASPNQIVNHVPGSGFYTSKVQLATSDLSNGVPKAFQLPAEKSKLLEYAEKNPDVLWVQKDNTHRNIKIKSTNDMDLSKNNSFVQKFVDNPLLIDNKKFDIGIYTVVTSLLPLRVYIYDGDVLIRFCPEDYHPFDANNVDKYVVGDDYTPIWEINSLKKYFNTQKMSFKSTIDSYLGMQGMDTSKIWLQIRNIIGEVFRTQQTKMLMSLQNLKLNPQYFELSRFDFVVDDQLNVFLMEANMSPNLSSGHFKQNQILYEQVLMNIFSLTGISTPITKEADILFKSRTSEQNPLVNSRDINLPLKFCVENKCESCDEAPECQLCGHCMNTETRKILEQTFVENSNRKQMKRIQFDYENHHPLTKEDHLLTLWLSTKCQLDNTWC.

Positions 73–411 (VTGSYESAHT…STPITKEADI (339 aa)) constitute a TTL domain. ATP is bound by residues 216-219 (QKFV), Lys-229, and Asp-231.

It belongs to the tubulin--tyrosine ligase family. As to expression, expressed in hypodermis and pharyngeal muscles.

Functionally, probable polyglutamylase that forms polyglutamate side chains on tubulin. Probably acts when complexed with other proteins. Appears to be dispensable for polar spindle formation in dividing embryonic cells, for cilia-dependent osmotic avoidance and for male mating behavior. Regulates microtubule dynamics in uterine muscle cells. This Caenorhabditis elegans protein is Probable tubulin polyglutamylase ttll-15.